A 537-amino-acid chain; its full sequence is Mitochondria-eating protein (537 aa).

The interval 1–270 is interaction with YWHAG/14-3-3 protein gamma; the sequence is MAESLKKLAK…SHSRSRSHSR (270 aa). 6 positions are modified to phosphoserine: Ser-13, Ser-85, Ser-123, Ser-127, Ser-154, and Ser-157. Residues 109 to 150 are disordered; the sequence is SKNRDNSPDQDQHQSDNESFSETQPTQVQDDLAESGKSLEGA. Basic and acidic residues predominate over residues 110–124; sequence KNRDNSPDQDQHQSD. A compositionally biased stretch (polar residues) spans 125–137; the sequence is NESFSETQPTQVQ. Coiled coils occupy residues 152–184 and 210–243; these read NGST…ARHK and QDVV…RSAR. Disordered regions lie at residues 171 to 212 and 233 to 291; these read QLKS…PQDV and EKSG…RAKM. Residues 179-209 show a composition bias toward basic and acidic residues; sequence EDARHKTSENRRSEALKSDHRSTKRTQDQRP. Residues 239–251 show a composition bias toward low complexity; it reads GRSARSPSPSTGT. The span at 252–269 shows a compositional bias: basic residues; the sequence is RSHRRGRSRSHSRSRSHS. Ser-283, Ser-285, and Ser-508 each carry phosphoserine.

The protein belongs to the MIEAP family. In terms of assembly, interacts (via coiled-coil domains) with BNIP3L (via BH3 domain). Interacts (via coiled-coil domains) with BNIP3 (via BH3 domain). Interacts with YWHAG/14-3-3 protein gamma; a protein that also plays a role in MALM. As to expression, in testis, expressed primarily in spermatids.

It is found in the cytoplasm. It localises to the cytosol. Its subcellular location is the mitochondrion outer membrane. The protein localises to the mitochondrion matrix. Functionally, key regulator of mitochondrial quality that mediates the repairing or degradation of unhealthy mitochondria in response to mitochondrial damage. Mediator of mitochondrial protein catabolic process (also named MALM) by mediating the degradation of damaged proteins inside mitochondria by promoting the accumulation in the mitochondrial matrix of hydrolases that are characteristic of the lysosomal lumen. Also involved in mitochondrion degradation of damaged mitochondria by promoting the formation of vacuole-like structures (named MIV), which engulf and degrade unhealthy mitochondria by accumulating lysosomes. The physical interaction of SPATA18/MIEAP, BNIP3 and BNIP3L/NIX at the mitochondrial outer membrane regulates the opening of a pore in the mitochondrial double membrane in order to mediate the translocation of lysosomal proteins from the cytoplasm to the mitochondrial matrix. Binds cardiolipin. May form molecular condensates (non-membrane-bounded organelles) within mitochondria that compartmentalize and promote cardiolipin metabolism. In Mus musculus (Mouse), this protein is Mitochondria-eating protein (Spata18).